We begin with the raw amino-acid sequence, 216 residues long: Ras-like protein rasW (216 aa).

Gly-16 to Thr-23 lines the GTP pocket. Residues Tyr-38 to Tyr-46 carry the Effector region motif. GTP is bound by residues Asp-63–Gln-67 and Asn-122–Asp-125. The tract at residues Lys-171–Asn-193 is disordered. The segment covering Arg-172 to Lys-189 has biased composition (basic and acidic residues). Cysteine methyl ester is present on Cys-213. Cys-213 carries S-geranylgeranyl cysteine lipidation. A propeptide spans Lys-214–Met-216 (removed in mature form).

It belongs to the small GTPase superfamily. Ras family.

The protein localises to the cell membrane. The catalysed reaction is GTP + H2O = GDP + phosphate + H(+). Functionally, ras proteins bind GDP/GTP and possess intrinsic GTPase activity. The chain is Ras-like protein rasW (rasW) from Dictyostelium discoideum (Social amoeba).